Reading from the N-terminus, the 355-residue chain is Dihydroorotate dehydrogenase (quinone) (355 aa).

Residues 68–72 (AGFDK) and Thr92 contribute to the FMN site. Position 72 (Lys72) interacts with substrate. A substrate-binding site is contributed by 117–121 (NRMGF). FMN-binding residues include Asn154 and Asn190. Position 190 (Asn190) interacts with substrate. The active-site Nucleophile is Ser193. Substrate is bound at residue Asn195. FMN is bound by residues Lys232 and Thr260. Substrate is bound at residue 261 to 262 (NT). FMN is bound by residues Gly286, Gly315, and 336 to 337 (YS).

Belongs to the dihydroorotate dehydrogenase family. Type 2 subfamily. Monomer. FMN is required as a cofactor.

It is found in the cell membrane. It catalyses the reaction (S)-dihydroorotate + a quinone = orotate + a quinol. The protein operates within pyrimidine metabolism; UMP biosynthesis via de novo pathway; orotate from (S)-dihydroorotate (quinone route): step 1/1. Catalyzes the conversion of dihydroorotate to orotate with quinone as electron acceptor. The chain is Dihydroorotate dehydrogenase (quinone) from Nocardioides sp. (strain ATCC BAA-499 / JS614).